A 1217-amino-acid polypeptide reads, in one-letter code: ATP-dependent helicase/nuclease subunit A (1217 aa).

The 466-residue stretch at 10–475 folds into the UvrD-like helicase ATP-binding domain; it reads VIWTDAQWQS…IDLSQNFRSR (466 aa). Position 31-38 (31-38) interacts with ATP; that stretch reads AAAGSGKT. One can recognise a UvrD-like helicase C-terminal domain in the interval 476-786; it reads KEVLSTTNYI…RMMTIHSSKG (311 aa).

Belongs to the helicase family. AddA subfamily. As to quaternary structure, heterodimer of AddA and AddB/RexB. Mg(2+) serves as cofactor.

It catalyses the reaction Couples ATP hydrolysis with the unwinding of duplex DNA by translocating in the 3'-5' direction.. The catalysed reaction is ATP + H2O = ADP + phosphate + H(+). Its function is as follows. The heterodimer acts as both an ATP-dependent DNA helicase and an ATP-dependent, dual-direction single-stranded exonuclease. Recognizes the chi site generating a DNA molecule suitable for the initiation of homologous recombination. The AddA nuclease domain is required for chi fragment generation; this subunit has the helicase and 3' -&gt; 5' nuclease activities. The protein is ATP-dependent helicase/nuclease subunit A of Staphylococcus aureus (strain MSSA476).